A 329-amino-acid chain; its full sequence is Prostaglandin reductase 1 (329 aa).

Thr-18 is subject to Phosphothreonine. Residues 152–155, Lys-178, Tyr-193, Asn-217, 239–245, 270–272, and Asn-321 contribute to the NADP(+) site; these read GAVG, CGAISQY, and FIV. Lys-178 carries the N6-(2-hydroxyisobutyryl)lysine; alternate modification. Lys-178 is subject to N6-acetyllysine; alternate.

This sequence belongs to the NADP-dependent oxidoreductase L4BD family. In terms of assembly, monomer or homodimer.

Its subcellular location is the cytoplasm. It carries out the reaction 13,14-dihydro-15-oxo-prostaglandin E1 + NADP(+) = 15-oxoprostaglandin E1 + NADPH + H(+). The catalysed reaction is 13,14-dihydro-15-oxo-prostaglandin E2 + NADP(+) = 15-oxoprostaglandin E2 + NADPH + H(+). The enzyme catalyses 13,14-dihydro-15-oxo-prostaglandin F1alpha + NADP(+) = 15-oxoprostaglandin F1alpha + NADPH + H(+). It catalyses the reaction 13,14-dihydro-15-oxo-PGF2alpha + NADP(+) = 15-oxoprostaglandin F2alpha + NADPH + H(+). It carries out the reaction leukotriene B4 + NADP(+) = 12-oxo-leukotriene B4 + NADPH + H(+). The catalysed reaction is 20-hydroxy-leukotriene B4 + NADP(+) = 12-oxo-20-hydroxy-leukotriene B4 + NADPH + H(+). The enzyme catalyses 6-trans-leukotriene B4 + NADP(+) = 12-oxo-(5S)-hydroxy-(6E,8E,10E,14Z)-eicosatetraenoate + NADPH + H(+). It catalyses the reaction (5S,12S)-dihydroxy-(6E,10E,12E,14Z)-eicosatetraenoate + NADP(+) = 12-oxo-(5S)-hydroxy-(6E,8E,10E,14Z)-eicosatetraenoate + NADPH + H(+). It carries out the reaction an n-alkanal + NADP(+) = an alk-2-enal + NADPH + H(+). The catalysed reaction is hexanal + NADP(+) = (E)-hex-2-enal + NADPH + H(+). The enzyme catalyses octanal + NADP(+) = (2E)-octenal + NADPH + H(+). It catalyses the reaction decanal + NADP(+) = (2E)-decenal + NADPH + H(+). It carries out the reaction dodecanal + NADP(+) = (2E)-dodecenal + NADPH + H(+). The catalysed reaction is 4-hydroxynonanal + NADP(+) = (E)-4-hydroxynon-2-enal + NADPH + H(+). The enzyme catalyses pentan-2-one + NADP(+) = (E)-pent-3-en-2-one + NADPH + H(+). It catalyses the reaction nonan-2-one + NADP(+) = (3E)-nonen-2-one + NADPH + H(+). NAD(P)H-dependent oxidoreductase involved in metabolic inactivation of pro- and anti-inflammatory eicosanoids: prostaglandins (PG), leukotrienes (LT) and lipoxins (LX). Catalyzes with high efficiency the reduction of the 13,14 double bond of 15-oxoPGs, including 15-oxo-PGE1, 15-oxo-PGE2, 15-oxo-PGF1-alpha and 15-oxo-PGF2-alpha. Catalyzes with lower efficiency the oxidation of the hydroxyl group at C12 of LTB4 and its derivatives, converting them into biologically less active 12-oxo-LTB4 metabolites. Reduces 15-oxo-LXA4 to 13,14 dihydro-15-oxo-LXA4, enhancing neutrophil recruitment at the inflammatory site. Plays a role in metabolic detoxification of alkenals and ketones. Reduces alpha,beta-unsaturated alkenals and ketones, particularly those with medium-chain length, showing highest affinity toward (2E)-decenal and (3E)-3-nonen-2-one. May inactivate 4-hydroxy-2-nonenal, a cytotoxic lipid constituent of oxidized low-density lipoprotein particles. The sequence is that of Prostaglandin reductase 1 (Ptgr1) from Mus musculus (Mouse).